Here is a 567-residue protein sequence, read N- to C-terminus: Protein phosphatase 1 regulatory inhibitor subunit 16B (567 aa).

Positions 15 to 55 (EKVPTLERLRAAQKRRAQQLKKWAQYEQDLQHRKRKHERKR) form a coiled coil. A Phosphoserine modification is found at Ser-69. 4 ANK repeats span residues 100–129 (DGLT…NVNA), 133–162 (ELWT…DLLA), 228–257 (QGAT…RVDV), and 261–290 (DGWE…SLSA). 3 positions are modified to phosphoserine: Ser-333, Ser-337, and Ser-350. Positions 378-403 (RTSTYNGDIRETRTDQENKDPNPRLE) are disordered. Residues 385 to 403 (DIRETRTDQENKDPNPRLE) show a composition bias toward basic and acidic residues. Phosphoserine is present on Ser-476. Positions 504 to 515 (SSMARTGESSSE) are enriched in polar residues. The disordered stretch occupies residues 504–525 (SSMARTGESSSEGKAPLIGGRT). Residues 530–559 (SNGTSVYYTVTSGDPPLLKFKAPIEEMEEK) form an ANK 5 repeat. The S-palmitoyl cysteine moiety is linked to residue Cys-563. Cys-564 is modified (cysteine methyl ester). Cys-564 carries S-farnesyl cysteine lipidation. A propeptide spans 565 to 567 (RIS) (removed in mature form).

As to quaternary structure, interacts with PPP1CA, PPP1CB and MSN. Interacts (via its fourth ankyrin repeat) with the mature dimeric form of RPSA/LAMR1. Interacts with EEF1A1. Interacts with PTEN. Interacts with ECE1. In terms of processing, phosphorylated by PKA and, after PKA priming, by GSK3B. Phosphorylation by GSK3B reduces its association with PP1C and enhances PP1C activity. Dephosphorylation by its associated PP1C results in enhanced association with PP1C, but reduced PP1C activity.

The protein localises to the cell membrane. It localises to the nucleus. It is found in the cell projection. Its function is as follows. Regulator of protein phosphatase 1 (PP1) that acts as a positive regulator of pulmonary endothelial cell (EC) barrier function. Involved in the regulation of the PI3K/AKT signaling pathway, angiogenesis and endothelial cell proliferation. Regulates angiogenesis and endothelial cell proliferation through the control of ECE1 dephosphorylation, trafficking and activity. Protects the endothelial barrier from lipopolysaccharide (LPS)-induced vascular leakage. Involved in the regulation of endothelial cell filopodia extension. May be a downstream target for TGF-beta1 signaling cascade in endothelial cells. Involved in PKA-mediated moesin dephosphorylation which is important in EC barrier protection against thrombin stimulation. Promotes the interaction of PPP1CA with RPSA/LAMR1 and in turn facilitates the dephosphorylation of RPSA/LAMR1. Involved in the dephosphorylation of EEF1A1. This is Protein phosphatase 1 regulatory inhibitor subunit 16B (PPP1R16B) from Homo sapiens (Human).